We begin with the raw amino-acid sequence, 359 residues long: Probable C-C chemokine receptor type 3 (359 aa).

Over Met-1 to Ser-38 the chain is Extracellular. Residues Trp-39–Ile-64 traverse the membrane as a helical segment. At Lys-65–Lys-68 the chain is on the cytoplasmic side. Residues Leu-69–Ile-95 traverse the membrane as a helical segment. Topologically, residues His-96–Lys-111 are extracellular. A disulfide bond links Cys-110 and Cys-187. A helical membrane pass occupies residues Met-112–Ile-133. The Cytoplasmic portion of the chain corresponds to Asp-134–Thr-150. Residues Val-151–Phe-175 form a helical membrane-spanning segment. Residues His-176–Arg-201 are Extracellular-facing. The chain crosses the membrane as a helical span at residues Phe-202–Ile-227. Over Lys-228 to Arg-243 the chain is Cytoplasmic. The chain crosses the membrane as a helical span at residues Leu-244–Phe-268. Over His-269–Leu-285 the chain is Extracellular. Residues Ala-286–Gly-309 traverse the membrane as a helical segment. Residues Glu-310–Phe-359 lie on the Cytoplasmic side of the membrane.

Belongs to the G-protein coupled receptor 1 family. In terms of tissue distribution, detected in skeletal muscle and in trace amounts in leukocytes.

The protein resides in the cell membrane. In terms of biological role, receptor for C-C type chemokine. Binds and responds to a variety of chemokines, including CCL11, CCL26, CCL7, CCL13, RANTES(CCL5) and CCL15. Subsequently transduces a signal by increasing the intracellular calcium ions level. In addition acts as a possible functional receptor for NARS1. The polypeptide is Probable C-C chemokine receptor type 3 (Ccr3) (Mus musculus (Mouse)).